The following is a 204-amino-acid chain: Large ribosomal subunit protein bL25 (204 aa).

This sequence belongs to the bacterial ribosomal protein bL25 family. CTC subfamily. Part of the 50S ribosomal subunit; part of the 5S rRNA/L5/L18/L25 subcomplex. Contacts the 5S rRNA. Binds to the 5S rRNA independently of L5 and L18.

In terms of biological role, this is one of the proteins that binds to the 5S RNA in the ribosome where it forms part of the central protuberance. The polypeptide is Large ribosomal subunit protein bL25 (Bordetella bronchiseptica (strain ATCC BAA-588 / NCTC 13252 / RB50) (Alcaligenes bronchisepticus)).